A 374-amino-acid chain; its full sequence is Lipopolysaccharide glucosyltransferase WaaG (374 aa).

Positions 15 and 19 each coordinate UDP-alpha-D-glucose. A membrane-interacting region region spans residues 103-132; that stretch reads YAEKVAQEKGFLYRLTSRYRHYAAFERATF. Residues Arg-173, Arg-208, Lys-209, Arg-261, Glu-281, Ala-283, Gly-284, Ile-285, Val-286, and Glu-289 each contribute to the UDP-alpha-D-glucose site.

The protein belongs to the glycosyltransferase group 1 family. Glycosyltransferase 4 subfamily.

The protein localises to the cell inner membrane. Its pathway is bacterial outer membrane biogenesis; LPS core biosynthesis. Inhibited by divalent metal ions such as Mg(2+), Mn(2+), Ca(2+), Zn(2+), Co(2+), Ni(2+) and Cu(2+). In terms of biological role, glucosyltransferase involved in the biosynthesis of the core oligosaccharide region of lipopolysaccharide (LPS). Catalyzes the addition of the first outer-core glucose from UDP-glucose to the inner-core heptose II. Cannot use other sugar donors, such as UDP-galactose, UDP-glucuronic acid, UDP-galacuronic acid, GDP-mannose, ADP-glucose and GDP-glucose. In the absence of a lipid acceptor, can slowly hydrolyze UDP-glucose. The polypeptide is Lipopolysaccharide glucosyltransferase WaaG (Escherichia coli (strain K12)).